A 417-amino-acid polypeptide reads, in one-letter code: NADH-quinone oxidoreductase subunit D (417 aa).

The protein belongs to the complex I 49 kDa subunit family. In terms of assembly, NDH-1 is composed of 14 different subunits. Subunits NuoB, C, D, E, F, and G constitute the peripheral sector of the complex.

It localises to the cell inner membrane. It carries out the reaction a quinone + NADH + 5 H(+)(in) = a quinol + NAD(+) + 4 H(+)(out). In terms of biological role, NDH-1 shuttles electrons from NADH, via FMN and iron-sulfur (Fe-S) centers, to quinones in the respiratory chain. The immediate electron acceptor for the enzyme in this species is believed to be ubiquinone. Couples the redox reaction to proton translocation (for every two electrons transferred, four hydrogen ions are translocated across the cytoplasmic membrane), and thus conserves the redox energy in a proton gradient. This chain is NADH-quinone oxidoreductase subunit D, found in Acidithiobacillus ferrooxidans (strain ATCC 53993 / BNL-5-31) (Leptospirillum ferrooxidans (ATCC 53993)).